A 360-amino-acid polypeptide reads, in one-letter code: MLYWLTALSDGGDVWNLFRYITFRAGGAFMTALIFGFLFGRPLINVLRRKQGKGQPIRDDGPEGHFSKAGTPTMGGLLIVGALLTSTLLWARWDNPFVWMVLFVTLAYALIGFADDYAKVSKQNTKGVSGKMRLALGVIIAVIAALWASYNHPAELQNQLALPVFKDTLINLGLLYVPFAICVIVGSANAVNLTDGLDGLAIMPAMIAASTLGVIAYAVGRVDFTEYLDVHYVPGTGEILIFTAALFGAGLGFLWYNAPPAAVFMGDTGSLALGGALGAIAVATKHELVLAIVGGLFVVEALSVIIQVLYFKRTGKRVFLMAPIHHHYEKKGWAEPTIVIRFWIISLILAMIGLATLKVR.

10 helical membrane-spanning segments follow: residues 27 to 47 (GAFMTALIFGFLFGRPLINVL), 71 to 91 (TPTMGGLLIVGALLTSTLLWA), 93 to 113 (WDNPFVWMVLFVTLAYALIGF), 134 to 154 (LALGVIIAVIAALWASYNHPA), 168 to 188 (TLINLGLLYVPFAICVIVGSA), 199 to 219 (GLAIMPAMIAASTLGVIAYAV), 239 to 259 (ILIFTAALFGAGLGFLWYNAP), 262 to 282 (AVFMGDTGSLALGGALGAIAV), 288 to 308 (LVLAIVGGLFVVEALSVIIQV), and 337 to 357 (TIVIRFWIISLILAMIGLATL).

It belongs to the glycosyltransferase 4 family. MraY subfamily. Mg(2+) serves as cofactor.

The protein resides in the cell inner membrane. The enzyme catalyses UDP-N-acetyl-alpha-D-muramoyl-L-alanyl-gamma-D-glutamyl-meso-2,6-diaminopimeloyl-D-alanyl-D-alanine + di-trans,octa-cis-undecaprenyl phosphate = di-trans,octa-cis-undecaprenyl diphospho-N-acetyl-alpha-D-muramoyl-L-alanyl-D-glutamyl-meso-2,6-diaminopimeloyl-D-alanyl-D-alanine + UMP. It participates in cell wall biogenesis; peptidoglycan biosynthesis. Its function is as follows. Catalyzes the initial step of the lipid cycle reactions in the biosynthesis of the cell wall peptidoglycan: transfers peptidoglycan precursor phospho-MurNAc-pentapeptide from UDP-MurNAc-pentapeptide onto the lipid carrier undecaprenyl phosphate, yielding undecaprenyl-pyrophosphoryl-MurNAc-pentapeptide, known as lipid I. The sequence is that of Phospho-N-acetylmuramoyl-pentapeptide-transferase from Ruegeria pomeroyi (strain ATCC 700808 / DSM 15171 / DSS-3) (Silicibacter pomeroyi).